Here is a 422-residue protein sequence, read N- to C-terminus: Proline--tRNA ligase (422 aa).

This sequence belongs to the class-II aminoacyl-tRNA synthetase family. ProS type 2 subfamily. As to quaternary structure, homodimer.

It localises to the cytoplasm. It carries out the reaction tRNA(Pro) + L-proline + ATP = L-prolyl-tRNA(Pro) + AMP + diphosphate. In terms of biological role, catalyzes the attachment of proline to tRNA(Pro) in a two-step reaction: proline is first activated by ATP to form Pro-AMP and then transferred to the acceptor end of tRNA(Pro). The polypeptide is Proline--tRNA ligase (Wolbachia sp. subsp. Drosophila simulans (strain wRi)).